The chain runs to 245 residues: Aliphatic sulfonates import ATP-binding protein SsuB 1 (245 aa).

The 219-residue stretch at leucine 9–tryptophan 227 folds into the ABC transporter domain. An ATP-binding site is contributed by glycine 41–serine 48.

Belongs to the ABC transporter superfamily. Aliphatic sulfonates importer (TC 3.A.1.17.2) family. In terms of assembly, the complex is composed of two ATP-binding proteins (SsuB), two transmembrane proteins (SsuC) and a solute-binding protein (SsuA).

It localises to the cell membrane. It carries out the reaction ATP + H2O + aliphatic sulfonate-[sulfonate-binding protein]Side 1 = ADP + phosphate + aliphatic sulfonateSide 2 + [sulfonate-binding protein]Side 1.. In terms of biological role, part of the ABC transporter complex SsuABC involved in aliphatic sulfonates import. Responsible for energy coupling to the transport system. The protein is Aliphatic sulfonates import ATP-binding protein SsuB 1 of Rhodococcus jostii (strain RHA1).